We begin with the raw amino-acid sequence, 224 residues long: Ribonuclease 3 (224 aa).

One can recognise an RNase III domain in the interval L4–S126. Position 39 (E39) interacts with Mg(2+). The active site involves D43. Mg(2+) contacts are provided by D112 and E115. The active site involves E115. Residues D153–I223 form the DRBM domain.

The protein belongs to the ribonuclease III family. Homodimer. Mg(2+) serves as cofactor.

Its subcellular location is the cytoplasm. The catalysed reaction is Endonucleolytic cleavage to 5'-phosphomonoester.. Functionally, digests double-stranded RNA. Involved in the processing of primary rRNA transcript to yield the immediate precursors to the large and small rRNAs (23S and 16S). Processes some mRNAs, and tRNAs when they are encoded in the rRNA operon. Processes pre-crRNA and tracrRNA of type II CRISPR loci if present in the organism. The sequence is that of Ribonuclease 3 from Mannheimia succiniciproducens (strain KCTC 0769BP / MBEL55E).